The following is a 348-amino-acid chain: Phenylalanine--tRNA ligase alpha subunit (348 aa).

Glu262 lines the Mg(2+) pocket.

It belongs to the class-II aminoacyl-tRNA synthetase family. Phe-tRNA synthetase alpha subunit type 1 subfamily. In terms of assembly, tetramer of two alpha and two beta subunits. Mg(2+) serves as cofactor.

The protein localises to the cytoplasm. It catalyses the reaction tRNA(Phe) + L-phenylalanine + ATP = L-phenylalanyl-tRNA(Phe) + AMP + diphosphate + H(+). This Streptococcus pneumoniae (strain JJA) protein is Phenylalanine--tRNA ligase alpha subunit.